A 264-amino-acid chain; its full sequence is 5'-nucleotidase SurE (264 aa).

Asp8, Asp9, Ser41, and Asn98 together coordinate a divalent metal cation.

The protein belongs to the SurE nucleotidase family. Requires a divalent metal cation as cofactor.

It is found in the cytoplasm. It catalyses the reaction a ribonucleoside 5'-phosphate + H2O = a ribonucleoside + phosphate. Functionally, nucleotidase that shows phosphatase activity on nucleoside 5'-monophosphates. This is 5'-nucleotidase SurE from Carboxydothermus hydrogenoformans (strain ATCC BAA-161 / DSM 6008 / Z-2901).